The chain runs to 635 residues: Threonine--tRNA ligase (635 aa).

The segment at 1-144 (MQLLLIHSDY…RSIRPEGTQR (144 aa)) is editing domain. The segment at 215–514 (PHVELMRRLE…TEEGKVPMLP (300 aa)) is catalytic. 3 residues coordinate Zn(2+): Cys307, His359, and His483.

It belongs to the class-II aminoacyl-tRNA synthetase family. In terms of assembly, homodimer. It depends on Zn(2+) as a cofactor.

The protein localises to the cytoplasm. The catalysed reaction is tRNA(Thr) + L-threonine + ATP = L-threonyl-tRNA(Thr) + AMP + diphosphate + H(+). Its function is as follows. Catalyzes the attachment of threonine to tRNA(Thr) in a two-step reaction: L-threonine is first activated by ATP to form Thr-AMP and then transferred to the acceptor end of tRNA(Thr). Also edits incorrectly charged L-seryl-tRNA(Thr). The protein is Threonine--tRNA ligase of Methanosarcina barkeri (strain Fusaro / DSM 804).